The sequence spans 269 residues: Tryptophan synthase alpha chain (269 aa).

Catalysis depends on proton acceptor residues E56 and D67.

The protein belongs to the TrpA family. Tetramer of two alpha and two beta chains.

The catalysed reaction is (1S,2R)-1-C-(indol-3-yl)glycerol 3-phosphate + L-serine = D-glyceraldehyde 3-phosphate + L-tryptophan + H2O. The protein operates within amino-acid biosynthesis; L-tryptophan biosynthesis; L-tryptophan from chorismate: step 5/5. In terms of biological role, the alpha subunit is responsible for the aldol cleavage of indoleglycerol phosphate to indole and glyceraldehyde 3-phosphate. This is Tryptophan synthase alpha chain from Mycobacterium ulcerans (strain Agy99).